The following is a 315-amino-acid chain: MAPPSLPCGIYAPTMTFFHPESEDIDIPTIKHHAQRLAKAGLAGLVVMGSNGEAVHCTRDEKIAVLSATREALDAAGFQSVPVLFGATEGSVRGTIELCKLAAAAGAAAALVLPPSYYRAQTDEASIEAYFVAVADASPIPLVLYNYPGAVSGIDMDSDLLIRLAQHKNIVGTKFTCGNTGKLTRVALATDAKTPFRDGSGYMAFGGMCDFTLQTLVSGGSGIIAGGANVMPKLCVKVWDSYSQGNRDEAEKLQKVLSRGDWPLTKAAIAGTKSAIQTYYGYGGYPRRPLKRLEQARVSAIEEGIREAMEIEKTL.

50–51 is a substrate binding site; sequence SN. Lys174 serves as the catalytic Schiff-base intermediate with substrate.

It belongs to the DapA family.

The catalysed reaction is 2-dehydro-3-deoxy-L-galactonate = L-glyceraldehyde + pyruvate. It functions in the pathway carbohydrate acid metabolism. In terms of biological role, mediates the conversion of 2-dehydro-3-deoxy-L-galactonate to pyruvate and L-glyceraldehyde in D-galacturonate catabolic process. In Hypocrea jecorina (Trichoderma reesei), this protein is L-threo-3-deoxy-hexylosonate aldolase (lga1).